The chain runs to 293 residues: Protease HtpX (293 aa).

Helical transmembrane passes span 4 to 24 (IGLF…VLSL) and 38 to 58 (LTNL…ISLF). A Zn(2+)-binding site is contributed by H145. E146 is a catalytic residue. H149 serves as a coordination point for Zn(2+). Helical transmembrane passes span 156-176 (ITLS…ARII) and 193-213 (IAFF…ASMI). E222 contacts Zn(2+).

This sequence belongs to the peptidase M48B family. Zn(2+) serves as cofactor.

Its subcellular location is the cell inner membrane. This chain is Protease HtpX, found in Cellvibrio japonicus (strain Ueda107) (Pseudomonas fluorescens subsp. cellulosa).